Consider the following 385-residue polypeptide: Succinate--CoA ligase [ADP-forming] subunit beta (385 aa).

Residues 9-244 (KALFRTFGVP…LDEEDPLEVE (236 aa)) enclose the ATP-grasp domain. Residues K46, 53–55 (GRG), E99, Q102, and E107 each bind ATP. The Mg(2+) site is built by N199 and D213. Substrate contacts are provided by residues N264 and 321–323 (GIL).

The protein belongs to the succinate/malate CoA ligase beta subunit family. Heterotetramer of two alpha and two beta subunits. Requires Mg(2+) as cofactor.

It catalyses the reaction succinate + ATP + CoA = succinyl-CoA + ADP + phosphate. It carries out the reaction GTP + succinate + CoA = succinyl-CoA + GDP + phosphate. It functions in the pathway carbohydrate metabolism; tricarboxylic acid cycle; succinate from succinyl-CoA (ligase route): step 1/1. Functionally, succinyl-CoA synthetase functions in the citric acid cycle (TCA), coupling the hydrolysis of succinyl-CoA to the synthesis of either ATP or GTP and thus represents the only step of substrate-level phosphorylation in the TCA. The beta subunit provides nucleotide specificity of the enzyme and binds the substrate succinate, while the binding sites for coenzyme A and phosphate are found in the alpha subunit. This Desulforapulum autotrophicum (strain ATCC 43914 / DSM 3382 / VKM B-1955 / HRM2) (Desulfobacterium autotrophicum) protein is Succinate--CoA ligase [ADP-forming] subunit beta.